The sequence spans 434 residues: D-amino acid dehydrogenase (434 aa).

3-17 serves as a coordination point for FAD; it reads VLVLGSGVIGTTSAW.

The protein belongs to the DadA oxidoreductase family. Requires FAD as cofactor.

It carries out the reaction a D-alpha-amino acid + A + H2O = a 2-oxocarboxylate + AH2 + NH4(+). Its pathway is amino-acid degradation; D-alanine degradation; NH(3) and pyruvate from D-alanine: step 1/1. In terms of biological role, oxidative deamination of D-amino acids. This Stenotrophomonas maltophilia (strain K279a) protein is D-amino acid dehydrogenase.